The following is a 287-amino-acid chain: Orotidine 5'-phosphate decarboxylase (287 aa).

Catalysis depends on K99, which acts as the Proton donor.

This sequence belongs to the OMP decarboxylase family. Type 2 subfamily.

The catalysed reaction is orotidine 5'-phosphate + H(+) = UMP + CO2. The protein operates within pyrimidine metabolism; UMP biosynthesis via de novo pathway; UMP from orotate: step 2/2. In Clostridium novyi (strain NT), this protein is Orotidine 5'-phosphate decarboxylase.